A 104-amino-acid chain; its full sequence is MMMRGMNMQSMMKQMQKLQKNMKKDQDELNATVFEGHAADDAVVVKFTGDHKMTDISIKEEAIDPDDVDMLQDLVLMAVNDAMSKIDKQTQETMGKYSRNIPGL.

Residues 1–19 (MMMRGMNMQSMMKQMQKLQ) show a composition bias toward low complexity. The segment at 1–24 (MMMRGMNMQSMMKQMQKLQKNMKK) is disordered.

Belongs to the YbaB/EbfC family. In terms of assembly, homodimer.

Its subcellular location is the cytoplasm. The protein localises to the nucleoid. Binds to DNA and alters its conformation. May be involved in regulation of gene expression, nucleoid organization and DNA protection. The protein is Nucleoid-associated protein LSL_1227 of Ligilactobacillus salivarius (strain UCC118) (Lactobacillus salivarius).